A 585-amino-acid polypeptide reads, in one-letter code: ATP-dependent lipid A-core flippase (585 aa).

6 helical membrane-spanning segments follow: residues 25–45 (FLAALACMGVASLAEPVFPAI), 63–83 (WLFYPLAIMGIFLVRAIFGFL), 127–146 (IAYDVTGVAGAATNALTSLI), 150–170 (LSIVGLLVWLLWLNWQLTLIT), 250–270 (QSPLVQFFAASGVAIIMGVAL), and 277–297 (QTTVGSFVSFVTAMLMLMAPL). The region spanning 26–309 (LAALACMGVA…VTDVNAPIQR (284 aa)) is the ABC transmembrane type-1 domain. Positions 341-577 (VEFDGVTFTY…DGLYARLYRM (237 aa)) constitute an ABC transporter domain. 375–382 (GPSGSGKT) provides a ligand contact to ATP.

The protein belongs to the ABC transporter superfamily. Lipid exporter (TC 3.A.1.106) family. Homodimer.

It is found in the cell inner membrane. The enzyme catalyses ATP + H2O + lipid A-core oligosaccharideSide 1 = ADP + phosphate + lipid A-core oligosaccharideSide 2.. Its function is as follows. Involved in lipopolysaccharide (LPS) biosynthesis. Translocates lipid A-core from the inner to the outer leaflet of the inner membrane. Transmembrane domains (TMD) form a pore in the inner membrane and the ATP-binding domain (NBD) is responsible for energy generation. The polypeptide is ATP-dependent lipid A-core flippase (Dechloromonas aromatica (strain RCB)).